We begin with the raw amino-acid sequence, 187 residues long: UPF0301 protein Ppha_2142 (187 aa).

It belongs to the UPF0301 (AlgH) family.

The chain is UPF0301 protein Ppha_2142 from Pelodictyon phaeoclathratiforme (strain DSM 5477 / BU-1).